The sequence spans 618 residues: Syncytin-B (618 aa).

Positions 1–17 (MTGFWVLCFVLFPSSLS) are cleaved as a signal peptide. At 18-545 (YPESWMPLVN…SWGQWPDLGR (528 aa)) the chain is on the extracellular side. Asn-27 carries N-linked (GlcNAc...) asparagine glycosylation. The CXXC signature appears at 44–47 (CWVC). Disulfide bonds link Cys-44–Cys-47, Cys-44–Cys-507, and Cys-499–Cys-506. N-linked (GlcNAc...) asparagine glycosylation is found at Asn-184, Asn-274, and Asn-357. The fusion peptide stretch occupies residues 422-442 (LFPFLAGLGISSALGTGIAGL). The immunosuppression stretch occupies residues 482-498 (LQNRRALDLITAEKGGT). The short motif at 499–507 (CLFLQEECC) is the CX6CC element. Residues 546–566 (WLPWLTPFLGPLLFLFFLLTF) traverse the membrane as a helical segment. Residues 567–618 (GSCLLNCLTRFVSQRLGSFVQDTAKRHVDSILQNFQYKKLPQDSPDEDTIPT) are Cytoplasmic-facing.

Belongs to the gamma type-C retroviral envelope protein family. As to quaternary structure, the mature protein consists of a trimer of SU-TM heterodimers. The SU-TM heterodimers are attached by a labile interchain disulfide bond. In terms of processing, synthesized as an inactive precursor that is heavily N-glycosylated and processed likely by furin in the Golgi to yield the mature SU and TM proteins. The cleavage site between SU and TM requires the minimal sequence [KR]-X-[KR]-R. The CXXC motif is highly conserved across a broad range of retroviral envelope proteins. It is thought to participate in the formation of a labile disulfide bond possibly with the CX6CC motif present in the transmembrane protein. Isomerization of the intersubunit disulfide bond to an SU intrachain disulfide bond is thought to occur upon receptor recognition in order to allow membrane fusion. In terms of tissue distribution, highly expressed in placenta where it localizes to syncytiotrophoblasts of the labyrinthine zona. Specifically localizes to syncytiotrophoblast layer II (SynT-II). Also detected at very low levels in ovary.

The protein resides in the cell membrane. In terms of biological role, this endogenous retroviral envelope protein has retained its original fusogenic properties. Together with Syna, participates in trophoblast fusion and the formation of a syncytium during placenta morphogenesis. Synb is specifically involved in formation of syncytiotrophoblast layer II (SynT-II). Promotes myoblast fusion, and may play a role in regeneration of damaged muscle tissue in males. May have immunosuppressive activity. The polypeptide is Syncytin-B (Mus musculus (Mouse)).